Reading from the N-terminus, the 333-residue chain is HTH-type transcriptional repressor PurR (333 aa).

An HTH lacI-type domain is found at 2-56; it reads ATIKDVAKMAGVSTTTVSHVINKTRFVAKETEQQVLQAIKNLNYSPSAVARSLKV. Residues 4–23 constitute a DNA-binding region (H-T-H motif); the sequence is IKDVAKMAGVSTTTVSHVIN. A DNA-binding region spans residues 48–56; it reads SAVARSLKV. The hypoxanthine site is built by Tyr73, Lys189, Thr191, Phe220, and Asp274.

As to quaternary structure, homodimer.

It participates in purine metabolism; purine nucleotide biosynthesis [regulation]. Functionally, is the main repressor of the genes involved in the de novo synthesis of purine nucleotides, regulating purB, purC, purEK, purF, purHD, purL, purMN and guaBA expression. PurR is allosterically activated to bind its cognate DNA by binding the purine corepressors, hypoxanthine or guanine, thereby effecting transcription repression. In Histophilus somni (strain 129Pt) (Haemophilus somnus), this protein is HTH-type transcriptional repressor PurR.